The following is a 207-amino-acid chain: Thiamine-phosphate synthase (207 aa).

4-amino-2-methyl-5-(diphosphooxymethyl)pyrimidine is bound by residues 37–41 (QYRHK) and asparagine 69. Aspartate 70 and aspartate 89 together coordinate Mg(2+). Positions 108 and 138 each coordinate 4-amino-2-methyl-5-(diphosphooxymethyl)pyrimidine. 2-[(2R,5Z)-2-carboxy-4-methylthiazol-5(2H)-ylidene]ethyl phosphate is bound by residues glycine 165 and 185-186 (IS).

This sequence belongs to the thiamine-phosphate synthase family. Mg(2+) serves as cofactor.

The catalysed reaction is 2-[(2R,5Z)-2-carboxy-4-methylthiazol-5(2H)-ylidene]ethyl phosphate + 4-amino-2-methyl-5-(diphosphooxymethyl)pyrimidine + 2 H(+) = thiamine phosphate + CO2 + diphosphate. It carries out the reaction 2-(2-carboxy-4-methylthiazol-5-yl)ethyl phosphate + 4-amino-2-methyl-5-(diphosphooxymethyl)pyrimidine + 2 H(+) = thiamine phosphate + CO2 + diphosphate. The enzyme catalyses 4-methyl-5-(2-phosphooxyethyl)-thiazole + 4-amino-2-methyl-5-(diphosphooxymethyl)pyrimidine + H(+) = thiamine phosphate + diphosphate. The protein operates within cofactor biosynthesis; thiamine diphosphate biosynthesis; thiamine phosphate from 4-amino-2-methyl-5-diphosphomethylpyrimidine and 4-methyl-5-(2-phosphoethyl)-thiazole: step 1/1. Its function is as follows. Condenses 4-methyl-5-(beta-hydroxyethyl)thiazole monophosphate (THZ-P) and 2-methyl-4-amino-5-hydroxymethyl pyrimidine pyrophosphate (HMP-PP) to form thiamine monophosphate (TMP). The chain is Thiamine-phosphate synthase from Janthinobacterium sp. (strain Marseille) (Minibacterium massiliensis).